Here is a 768-residue protein sequence, read N- to C-terminus: MSFTRWEVFFGLSVLALTMPFSAGVTNLRDVSAINNLYITLGAPSLHHWLAFGGDPCGEKWQGVVCDSSNITEIRIPGMKVGGGLSDTLADFSSIQVMDFSSNHISGTIPQALPSSIRNLSLSSNRFTGNIPFTLSFLSDLSELSLGSNLLSGEIPDYFQQLSKLTKLDLSSNILEGHLPSSMGDLASLKILYLQDNKLTGTLDVIEDLFLTDLNVENNLFSGPIPPNLLKIPNFKKDGTPFNTSIITPPPPPVVDPPPATHRAPPVPRIPPVSGVPPAPFAPFAPLQPQQHPPPSPPLVWSPPSSDNGGGDPWNSVSGQPTLQISPPSGSGSGKFWSTQRIILVVSSVAIIVLVSGLCVTLWRCCRSKIYNRYYSGARKDLQRPYFNKPPSQPTPTMGKVSREPMVKPFDGYGAGDRKYGYPMPQRAEESRRAMPPTSYYNKDVNTPQKPLQQPPRQFQSNDTASKRAAHFPPGLNSSSSATVFTIASLQQYTNNFSEENIIGEGSIGNVYRAELRHGKFLAVKKLSNTINRTQSDGEFLNLVSNVLKLKRGHILELLGYCNEFGQRLLVYEYCPNGSLQDALHLDRKLHKKLTWNVRINIALGASKALQFLHEVCQPPVVHQNFKSSKVLLDGKLSVRVADSGLAYMLPPRPTSQMAGYAAPEVEYGSYTCQSDVFSLGVVMLELLTGRRPFDRTRPRGHQTLAQWAIPRLHDIDALTRMVDPSLHGAYPMKSLSRFADIISRSLQMEPGFRPPISEIVQDLQHMI.

The N-terminal stretch at 1 to 24 (MSFTRWEVFFGLSVLALTMPFSAG) is a signal peptide. The Extracellular segment spans residues 25-341 (VTNLRDVSAI…GSGKFWSTQR (317 aa)). C57 and C66 form a disulfide bridge. N70 carries an N-linked (GlcNAc...) asparagine glycan. LRR repeat units lie at residues 94–115 (SIQV…ALPS), 116–139 (SIRN…SFLS), 140–162 (DLSE…FQQL), 164–186 (KLTK…MGDL), 188–210 (SLKI…EDLF), and 211–231 (LTDL…NLLK). A glycan (N-linked (GlcNAc...) asparagine) is linked at N119. The tract at residues 241–334 (PFNTSIITPP…ISPPSGSGSG (94 aa)) is disordered. The N-linked (GlcNAc...) asparagine glycan is linked to N243. Composition is skewed to pro residues over residues 248–283 (TPPP…PFAP) and 291–301 (QHPPPSPPLVW). Positions 315–334 (NSVSGQPTLQISPPSGSGSG) are enriched in polar residues. The helical transmembrane segment at 342–362 (IILVVSSVAIIVLVSGLCVTL) threads the bilayer. At 363 to 768 (WRCCRSKIYN…EIVQDLQHMI (406 aa)) the chain is on the cytoplasmic side. The interval 385–477 (PYFNKPPSQP…RAAHFPPGLN (93 aa)) is disordered. The span at 439–464 (SYYNKDVNTPQKPLQQPPRQFQSNDT) shows a compositional bias: polar residues. Residues 497-768 (FSEENIIGEG…EIVQDLQHMI (272 aa)) enclose the Protein kinase domain. Residues 503–511 (IGEGSIGNV) and K525 each bind ATP.

It belongs to the protein kinase superfamily. Ser/Thr protein kinase family. Interacts (via intra-cellular domain) with AN; this interaction is not required for correct subcellular localization and recycling of SUB. Binds to QKY and POQ at the plasma membrane. Binds to QKY at plasmodesmata (PD) in root epidermal cells to promote tissue morphogenesis. In terms of tissue distribution, expressed in leaves, stems, inflorescences, flower buds and developing root epidermis.

The protein localises to the cell membrane. It is found in the cell junction. It localises to the plasmodesma. Regulated at the post-transcriptional level. Regulates the expression of transcription factors that define the cell fates. Acts in a non-cell-autonomous fashion, functions in a radial inside-out signaling process, and mediates cell morphogenesis and cell fate across clonally distinct cell layers in floral primordia, developing ovules, and root meristems. Seems to be required for the regulation of cell shape and the orientation of the mitotic division plane. Involved in root hair specification, in the formation of the outer integument and the shape of organs such as carpels and petals and is necessary for the shape and height of the stem. Non-functional SUB proteins are retained in the endoplasmic reticulum and degraded by endoplasmic reticulum-associated degradation (ERAD). Collaboratively with QKY and POQ, regulates cell growth anisotropy during gynoecium development, thus linking together cell-cell communication and cellular growth. Together with QKY, links RLK-dependent signal transduction and intercellular communication mediated by plasmodesmata (PD) to regulate tissue morphogenesis. The polypeptide is Protein STRUBBELIG (Arabidopsis thaliana (Mouse-ear cress)).